A 412-amino-acid polypeptide reads, in one-letter code: Histidinol dehydrogenase (412 aa).

Residues Y118, Q176, and N199 each contribute to the NAD(+) site. 3 residues coordinate substrate: T222, Q244, and H247. Zn(2+) is bound by residues Q244 and H247. Catalysis depends on proton acceptor residues E311 and H312. H312, D345, E399, and H404 together coordinate substrate. D345 lines the Zn(2+) pocket. H404 contributes to the Zn(2+) binding site.

Belongs to the histidinol dehydrogenase family. Zn(2+) serves as cofactor.

It carries out the reaction L-histidinol + 2 NAD(+) + H2O = L-histidine + 2 NADH + 3 H(+). The protein operates within amino-acid biosynthesis; L-histidine biosynthesis; L-histidine from 5-phospho-alpha-D-ribose 1-diphosphate: step 9/9. Functionally, catalyzes the sequential NAD-dependent oxidations of L-histidinol to L-histidinaldehyde and then to L-histidine. The polypeptide is Histidinol dehydrogenase (Thermus thermophilus (strain ATCC BAA-163 / DSM 7039 / HB27)).